Reading from the N-terminus, the 164-residue chain is IQ domain-containing protein F2 (164 aa).

IQ domains are found at residues R43–I72 and R99–I128.

The chain is IQ domain-containing protein F2 (IQCF2) from Homo sapiens (Human).